Here is a 350-residue protein sequence, read N- to C-terminus: GTPase Obg (350 aa).

Residues 1 to 159 enclose the Obg domain; it reads MKLVDEAEIL…RLLKLELKLL (159 aa). In terms of domain architecture, OBG-type G spans 160 to 337; sequence ADVGLLGFPN…IMKDVMAFFD (178 aa). GTP contacts are provided by residues 166-173, 191-195, 213-216, 287-290, and 318-320; these read GFPNAGKS, FTTLY, DVPG, NKAD, and SAL. Mg(2+)-binding residues include serine 173 and threonine 193.

It belongs to the TRAFAC class OBG-HflX-like GTPase superfamily. OBG GTPase family. As to quaternary structure, monomer. Mg(2+) is required as a cofactor.

The protein resides in the cytoplasm. In terms of biological role, an essential GTPase which binds GTP, GDP and possibly (p)ppGpp with moderate affinity, with high nucleotide exchange rates and a fairly low GTP hydrolysis rate. Plays a role in control of the cell cycle, stress response, ribosome biogenesis and in those bacteria that undergo differentiation, in morphogenesis control. This is GTPase Obg from Xanthomonas campestris pv. campestris (strain 8004).